Consider the following 137-residue polypeptide: MTPLVVLAVAIAGGLGAVARLVLDGVLRSRAPVSFPLGTTAINVTGSFVLGLVTALALGHGLPPEWRAILGTGFIGGYTTFSTASYEAVRLAQQRQYRAALLTGVGMMFLALGAAGLGLWLGGLAVAPTPPAPSTTL.

Transmembrane regions (helical) follow at residues 3-23 (PLVV…RLVL), 42-62 (INVT…GHGL), 69-89 (ILGT…YEAV), and 107-127 (MMFL…LAVA). The Na(+) site is built by Gly-76 and Thr-79.

This sequence belongs to the fluoride channel Fluc/FEX (TC 1.A.43) family.

It is found in the cell membrane. The catalysed reaction is fluoride(in) = fluoride(out). With respect to regulation, na(+) is not transported, but it plays an essential structural role and its presence is essential for fluoride channel function. Functionally, fluoride-specific ion channel. Important for reducing fluoride concentration in the cell, thus reducing its toxicity. In Leifsonia xyli subsp. xyli (strain CTCB07), this protein is Fluoride-specific ion channel FluC 1.